Consider the following 478-residue polypeptide: GMP reductase (478 aa).

2 consecutive CBS domains span residues 95 to 152 (VVDT…VRDI) and 153 to 211 (ALSD…AVDA). NADP(+) is bound by residues 245-247 (DTA) and 295-297 (GVG). Cys-302 (thioimidate intermediate) is an active-site residue.

Belongs to the IMPDH/GMPR family. GuaB1 subfamily. Homooctamer composed of two tetramers. The oligomerization state is regulated by ligands and pH. It depends on a monovalent cation as a cofactor.

The catalysed reaction is IMP + NH4(+) + NADP(+) = GMP + NADPH + 2 H(+). The protein operates within purine metabolism; IMP biosynthesis via salvage pathway. Its activity is regulated as follows. Activity is allosterically regulated by the ATP/GTP ratio in a pH-dependent manner. At pH 7.8, GTP has only a minor positive effect and ATP only a minor negative effect on the activity, however, at lower pH values, the effects of ATP and GTP increase. ATP-dependent inhibition can be restored by increasing GTP concentration. IMP and XMP are competitive inhibitors. In terms of biological role, involved in the purine-salvage pathway. Catalyzes the NADPH-dependent conversion of GMP to IMP. Is not essential for viability, but may contribute to the regulation of the purine nucleotide pool by recycling GMP to IMP. The polypeptide is GMP reductase (Mycolicibacterium smegmatis (strain ATCC 700084 / mc(2)155) (Mycobacterium smegmatis)).